Here is a 251-residue protein sequence, read N- to C-terminus: Imidazole glycerol phosphate synthase subunit HisF (251 aa).

Catalysis depends on residues aspartate 11 and aspartate 130.

It belongs to the HisA/HisF family. Heterodimer of HisH and HisF.

Its subcellular location is the cytoplasm. The enzyme catalyses 5-[(5-phospho-1-deoxy-D-ribulos-1-ylimino)methylamino]-1-(5-phospho-beta-D-ribosyl)imidazole-4-carboxamide + L-glutamine = D-erythro-1-(imidazol-4-yl)glycerol 3-phosphate + 5-amino-1-(5-phospho-beta-D-ribosyl)imidazole-4-carboxamide + L-glutamate + H(+). It functions in the pathway amino-acid biosynthesis; L-histidine biosynthesis; L-histidine from 5-phospho-alpha-D-ribose 1-diphosphate: step 5/9. IGPS catalyzes the conversion of PRFAR and glutamine to IGP, AICAR and glutamate. The HisF subunit catalyzes the cyclization activity that produces IGP and AICAR from PRFAR using the ammonia provided by the HisH subunit. The chain is Imidazole glycerol phosphate synthase subunit HisF from Chlorobium phaeovibrioides (strain DSM 265 / 1930) (Prosthecochloris vibrioformis (strain DSM 265)).